A 568-amino-acid chain; its full sequence is MRQTMTFIPTLKEVPADAEVKSHQLLLRAGFIRQVASGIYSYLPLATLTLRKIEAIVREELEAIGAAEMLMPALQPAELWHESGRWADYGPELMRLKDRAARDFVLGPTHEELITSLLRDEIKSYKRLPITLYQIQTKFRDEKRPRFGLLRGREFIMKDAYSFHATSESLDETFELMHQAYSNIFSRCGLEFRSVIADSGSIGGNESKEFMALSDIGEDTIAYSDASDYAANTEMAPVLYMEKKSHELEKELEKVATENQKTIADIVEFLEVPIEKTMKSMLYQVDEEVIMVLVRGDHEVNDIKIKNALDATNVELVDPNVAFELLGANFGSLGPIGVPEKIRVFADNAVKGIVNAVAGANEDGYHYVNVNPNRDFEVTSYFDLRMIQAGDLSPDGQGVIKFAEGIEVGHIFKLGTKYSEAMNATILDENGRAQPIIMGCYGIGLSRILSAIAEQSNDENGLVWDKQISPFDLHLIPVNMKSEEQVAFAESLYDSLQKAGFSVLIDDRTERAGVKFADADLIGLPIRITVGKKAAEGIVEVKIRKTGEMIEVRQDELLNTLPILFGDK.

This sequence belongs to the class-II aminoacyl-tRNA synthetase family. ProS type 1 subfamily. As to quaternary structure, homodimer.

It localises to the cytoplasm. The enzyme catalyses tRNA(Pro) + L-proline + ATP = L-prolyl-tRNA(Pro) + AMP + diphosphate. In terms of biological role, catalyzes the attachment of proline to tRNA(Pro) in a two-step reaction: proline is first activated by ATP to form Pro-AMP and then transferred to the acceptor end of tRNA(Pro). As ProRS can inadvertently accommodate and process non-cognate amino acids such as alanine and cysteine, to avoid such errors it has two additional distinct editing activities against alanine. One activity is designated as 'pretransfer' editing and involves the tRNA(Pro)-independent hydrolysis of activated Ala-AMP. The other activity is designated 'posttransfer' editing and involves deacylation of mischarged Ala-tRNA(Pro). The misacylated Cys-tRNA(Pro) is not edited by ProRS. This chain is Proline--tRNA ligase, found in Listeria innocua serovar 6a (strain ATCC BAA-680 / CLIP 11262).